Here is a 215-residue protein sequence, read N- to C-terminus: Phosphoserine phosphatase (215 aa).

The active-site Nucleophile is the Asp-11. 2 residues coordinate Mg(2+): Asp-11 and Asp-13. Asp-13 acts as the Proton donor in catalysis. Substrate contacts are provided by residues Glu-20, Arg-56, 99–100, and Lys-144; that span reads SG. Asp-167 contributes to the Mg(2+) binding site. Asn-170 is a substrate binding site.

The protein belongs to the HAD-like hydrolase superfamily. SerB family. Requires Mg(2+) as cofactor.

It carries out the reaction O-phospho-L-serine + H2O = L-serine + phosphate. The enzyme catalyses O-phospho-D-serine + H2O = D-serine + phosphate. It participates in amino-acid biosynthesis; L-serine biosynthesis; L-serine from 3-phospho-D-glycerate: step 3/3. The sequence is that of Phosphoserine phosphatase from Streptococcus thermophilus (strain ATCC BAA-250 / LMG 18311).